The primary structure comprises 419 residues: Serine hydroxymethyltransferase (419 aa).

Residues Leu-121 and 125–127 (GHL) contribute to the (6S)-5,6,7,8-tetrahydrofolate site. Lys-230 carries the post-translational modification N6-(pyridoxal phosphate)lysine. 354 to 356 (SPF) contributes to the (6S)-5,6,7,8-tetrahydrofolate binding site.

Belongs to the SHMT family. Homodimer. It depends on pyridoxal 5'-phosphate as a cofactor.

The protein resides in the cytoplasm. It catalyses the reaction (6R)-5,10-methylene-5,6,7,8-tetrahydrofolate + glycine + H2O = (6S)-5,6,7,8-tetrahydrofolate + L-serine. Its pathway is one-carbon metabolism; tetrahydrofolate interconversion. The protein operates within amino-acid biosynthesis; glycine biosynthesis; glycine from L-serine: step 1/1. In terms of biological role, catalyzes the reversible interconversion of serine and glycine with tetrahydrofolate (THF) serving as the one-carbon carrier. This reaction serves as the major source of one-carbon groups required for the biosynthesis of purines, thymidylate, methionine, and other important biomolecules. Also exhibits THF-independent aldolase activity toward beta-hydroxyamino acids, producing glycine and aldehydes, via a retro-aldol mechanism. The sequence is that of Serine hydroxymethyltransferase from Prochlorococcus marinus (strain SARG / CCMP1375 / SS120).